The following is a 79-amino-acid chain: Hematopoietic cell signal transducer (79 aa).

Positions 1 to 18 (MAPPGHLLFLFLLPVAAS) are cleaved as a signal peptide. The Extracellular portion of the chain corresponds to 19–35 (QTNEGSCSGCGPLSLPL). Residues 36-56 (LAGLVAADAVMSLLIVGVVFV) form a helical membrane-spanning segment. Residues 57–79 (CMRLHSRPAQEDGRVYINMPGRG) lie on the Cytoplasmic side of the membrane. Tyrosine 72 bears the Phosphotyrosine mark. The tract at residues 72-74 (YIN) is GRB2 binding site. Residues 72–75 (YINM) form a PIK3R1 binding site region.

Belongs to the DAP10 family. In terms of assembly, homodimer; Disulfide-linked. Heterohexamer composed of four subunits of HCST/DAP10 and two subunits of KLRK1. Interacts (via transmembrane domain) with KLRK1 (via transmembrane domain); the interaction is required for KLRK1 NK cell surface and induces NK cell-mediated cytotoxicity. Interacts with PIK3R1 and GRB2. Interacts with CLEC5A. Forms an CLEC5A/TYROBP/HCST trimolecular complex depending almost solely on TYROBP. Interacts with CD300H. Phosphorylated; PIK3R1 and GRB2 associate specifically with tyrosine-phosphorylated HCST. In terms of processing, O-glycosylated.

Its subcellular location is the membrane. Transmembrane adapter protein which associates with KLRK1 to form an activation receptor KLRK1-HCST in lymphoid and myeloid cells; this receptor plays a major role in triggering cytotoxicity against target cells expressing cell surface ligands such as MHC class I chain-related MICA and MICB, and UL16-binding proteins (ULBPs); these ligands are up-regulated by stress conditions and pathological state such as viral infection and tumor transformation. Functions as a docking site for PI3-kinase PIK3R1 and GRB2. Interaction of ULBPs with KLRK1-HCST triggers calcium mobilization and activation of the PIK3R1, MAP2K/ERK, and JAK2/STAT5 signaling pathways. Both PIK3R1 and GRB2 are required for full KLRK1-HCST-mediated activation and ultimate killing of target cells. In NK cells, KLRK1-HCST signaling directly induces cytotoxicity and enhances cytokine production initiated via DAP12/TYROBP-associated receptors. In T-cells, it provides primarily costimulation for TCR-induced signals. KLRK1-HCST receptor plays a role in immune surveillance against tumors and is required for cytolysis of tumors cells; indeed, melanoma cells that do not express KLRK1 ligands escape from immune surveillance mediated by NK cells. This is Hematopoietic cell signal transducer (Hcst) from Rattus norvegicus (Rat).